A 1221-amino-acid polypeptide reads, in one-letter code: DNA-directed RNA polymerase subunit beta (1221 aa).

A disordered region spans residues 1176–1221 (EKKKLAEEEAEIAAEAEAEGSAEGDAAEADADANEAETADDDKASK). The span at 1183 to 1215 (EEAEIAAEAEAEGSAEGDAAEADADANEAETAD) shows a compositional bias: acidic residues.

It belongs to the RNA polymerase beta chain family. As to quaternary structure, the RNAP catalytic core consists of 2 alpha, 1 beta, 1 beta' and 1 omega subunit. When a sigma factor is associated with the core the holoenzyme is formed, which can initiate transcription.

It catalyses the reaction RNA(n) + a ribonucleoside 5'-triphosphate = RNA(n+1) + diphosphate. Functionally, DNA-dependent RNA polymerase catalyzes the transcription of DNA into RNA using the four ribonucleoside triphosphates as substrates. The protein is DNA-directed RNA polymerase subunit beta of Lactobacillus delbrueckii subsp. bulgaricus (strain ATCC 11842 / DSM 20081 / BCRC 10696 / JCM 1002 / NBRC 13953 / NCIMB 11778 / NCTC 12712 / WDCM 00102 / Lb 14).